The following is a 408-amino-acid chain: tRNA-specific 2-thiouridylase MnmA (408 aa).

Residues Ala-27–Ser-34 and Leu-53 each bind ATP. The active-site Nucleophile is the Cys-121. A disulfide bond links Cys-121 and Cys-222. Gly-145 lines the ATP pocket. Positions Arg-172–Gln-174 are interaction with tRNA. Residue Cys-222 is the Cysteine persulfide intermediate of the active site.

The protein belongs to the MnmA/TRMU family.

It localises to the cytoplasm. The catalysed reaction is S-sulfanyl-L-cysteinyl-[protein] + uridine(34) in tRNA + AH2 + ATP = 2-thiouridine(34) in tRNA + L-cysteinyl-[protein] + A + AMP + diphosphate + H(+). Functionally, catalyzes the 2-thiolation of uridine at the wobble position (U34) of tRNA, leading to the formation of s(2)U34. The polypeptide is tRNA-specific 2-thiouridylase MnmA (Rhizobium johnstonii (strain DSM 114642 / LMG 32736 / 3841) (Rhizobium leguminosarum bv. viciae)).